A 448-amino-acid polypeptide reads, in one-letter code: N-succinylarginine dihydrolase (448 aa).

Residues 19–28 (GGLSYGNVAS), Asn-110, and 137–138 (HR) contribute to the substrate site. Glu-174 is an active-site residue. Arg-214 is a substrate binding site. The active site involves His-250. 2 residues coordinate substrate: Asp-252 and Asn-365. The active-site Nucleophile is the Cys-371.

This sequence belongs to the succinylarginine dihydrolase family. As to quaternary structure, homodimer.

It catalyses the reaction N(2)-succinyl-L-arginine + 2 H2O + 2 H(+) = N(2)-succinyl-L-ornithine + 2 NH4(+) + CO2. The protein operates within amino-acid degradation; L-arginine degradation via AST pathway; L-glutamate and succinate from L-arginine: step 2/5. Its function is as follows. Catalyzes the hydrolysis of N(2)-succinylarginine into N(2)-succinylornithine, ammonia and CO(2). This is N-succinylarginine dihydrolase from Pseudomonas fluorescens (strain SBW25).